The sequence spans 36 residues: Pancreatic polypeptide (36 aa).

Position 36 is a tyrosine amide (tyrosine 36).

It belongs to the NPY family.

The protein resides in the secreted. Hormone secreted by pancreatic cells that acts as a regulator of pancreatic and gastrointestinal functions probably by signaling through the G protein-coupled receptor NPY4R2. In Erinaceus europaeus (Western European hedgehog), this protein is Pancreatic polypeptide (PPY).